The sequence spans 261 residues: Small ribosomal subunit protein uS2 (261 aa).

Residues 222 to 261 (GKALREQDGEANEEQPISEEEKKEVLEEAMSEEDFEGDKE) are disordered. 2 stretches are compositionally biased toward acidic residues: residues 230 to 239 (GEANEEQPIS) and 248 to 261 (EEAMSEEDFEGDKE).

Belongs to the universal ribosomal protein uS2 family.

The polypeptide is Small ribosomal subunit protein uS2 (Campylobacter lari (strain RM2100 / D67 / ATCC BAA-1060)).